Consider the following 551-residue polypeptide: PA-phosphatase related-family protein DDB_G0268928 (551 aa).

2 stretches are compositionally biased toward polar residues: residues 26–47 and 137–152; these read TESL…SGKD and KYNT…SSNK. 2 disordered regions span residues 26–50 and 123–172; these read TESL…DYSS and KGED…NNNN. Positions 153–171 are enriched in low complexity; that stretch reads TQTTVLNNSTTSSNNINNN. The next 7 helical transmembrane spans lie at 211-231, 232-252, 273-293, 346-366, 393-413, 474-494, and 500-520; these read SYSD…SIIY, SLLV…LVFI, LAVG…AVVL, ILQL…IYIL, MFIC…LIFP, ILPA…IATM, and YFVD…YGGF.

It belongs to the PA-phosphatase related phosphoesterase family.

The protein localises to the membrane. The polypeptide is PA-phosphatase related-family protein DDB_G0268928 (Dictyostelium discoideum (Social amoeba)).